The chain runs to 141 residues: Large ribosomal subunit protein bL17 (141 aa).

It belongs to the bacterial ribosomal protein bL17 family. In terms of assembly, part of the 50S ribosomal subunit. Contacts protein L32.

The sequence is that of Large ribosomal subunit protein bL17 from Maridesulfovibrio salexigens (strain ATCC 14822 / DSM 2638 / NCIMB 8403 / VKM B-1763) (Desulfovibrio salexigens).